The chain runs to 45 residues: Photosystem II reaction center protein K (45 aa).

Residues 1 to 8 (MEAALLLA) constitute a propeptide that is removed on maturation. The helical transmembrane segment at 24–44 (LPIIPLFFLALAFVWQAAVGF) threads the bilayer.

This sequence belongs to the PsbK family. PSII is composed of 1 copy each of membrane proteins PsbA, PsbB, PsbC, PsbD, PsbE, PsbF, PsbH, PsbI, PsbJ, PsbK, PsbL, PsbM, PsbT, PsbX, PsbY, PsbZ, Psb30/Ycf12, peripheral proteins PsbO, CyanoQ (PsbQ), PsbU, PsbV and a large number of cofactors. It forms dimeric complexes.

It is found in the cellular thylakoid membrane. In terms of biological role, one of the components of the core complex of photosystem II (PSII). PSII is a light-driven water:plastoquinone oxidoreductase that uses light energy to abstract electrons from H(2)O, generating O(2) and a proton gradient subsequently used for ATP formation. It consists of a core antenna complex that captures photons, and an electron transfer chain that converts photonic excitation into a charge separation. The protein is Photosystem II reaction center protein K of Rippkaea orientalis (strain PCC 8801 / RF-1) (Cyanothece sp. (strain PCC 8801)).